Reading from the N-terminus, the 509-residue chain is uncharacterized protein (509 aa).

13 consecutive transmembrane segments (helical) span residues 14 to 34, 117 to 137, 158 to 178, 188 to 208, 209 to 229, 240 to 260, 303 to 323, 324 to 344, 359 to 379, 399 to 419, 423 to 443, 458 to 478, and 484 to 504; these read SAFTILFAILILAVGLTWVIP, TIEAVDVMVFIFVLGGMIGVI, EFFIVFCVSVLMVLGGTTCGI, ILVPVFLALGYDAIVCVGAIF, LAASMGTAFSTINPFSVVIAS, IGFRALGLVLGATCVIAYLYW, LILTLFCISFPIMIWGVMVGG, WWFPQMAASFLAITIIIMFIS, ASELVGVSLIIGLARGVNLVL, MPGSVFILGQLVVFIFLGLIV, SGLAVLSMPIMAPLADSVGIP, MLFLAPTGLVLVTLQMLQIPF, and FVMPMIGCLLLIGSILLVVQV.

The protein to E.coli YfcC. It to B.subtilis YcgA.

It localises to the cell membrane. This is an uncharacterized protein from Haemophilus influenzae (strain ATCC 51907 / DSM 11121 / KW20 / Rd).